Reading from the N-terminus, the 141-residue chain is Mitochondrial import inner membrane translocase subunit tim16 (141 aa).

Residues 59 to 117 (EACKILNVNKPADGTAANMEEVMERFKRLFDANDPEKGGSFYLQSKVVRARERLEAEIK) are J-like. Positions 119-141 (KMEEKQAEEEVKEGWNPKIYKDR) are disordered.

This sequence belongs to the TIM16/PAM16 family. In terms of assembly, heterodimer with tim14/pam18. Component of the PAM complex, at least composed of hsp70-5/ssc1, grpe/mge1, tim44, un-4/pam16, pam17 and tim14/pam18.

The protein localises to the mitochondrion inner membrane. In terms of biological role, essential component of the PAM complex, a complex required for the translocation of transit peptide-containing proteins from the inner membrane into the mitochondrial matrix in an ATP-dependent manner. In the complex, it is required to regulate activity of mtHSP70 (hsp70-5) via its interaction with tim14/pam18. May act by positioning tim14/pam18 in juxtaposition to mtHSP70 at the translocon to maximize ATPase stimulation. The polypeptide is Mitochondrial import inner membrane translocase subunit tim16 (un-4) (Neurospora crassa (strain ATCC 24698 / 74-OR23-1A / CBS 708.71 / DSM 1257 / FGSC 987)).